A 479-amino-acid polypeptide reads, in one-letter code: Solute carrier family 7 member 13 (479 aa).

At 1–14 (MAMDIEKKIYLKRQ) the chain is on the cytoplasmic side. A helical transmembrane segment spans residues 15-35 (LGYFWGTNFLIINIIGAGIFV). The Extracellular portion of the chain corresponds to 36–47 (SPKGVLQYSSMN). The helical transmembrane segment at 48–68 (VGVSLCVWVFCAVLSMTSTLC) threads the bilayer. At 69 to 89 (AAEIGITFPYTVAHYYFLKRC) the chain is on the cytoplasmic side. Residues 90–110 (FGPFVAFLRLWTSLFTGPGVL) form a helical membrane-spanning segment. Residues 111-129 (ASQALLLAEYGIQPFYPSC) lie on the Extracellular side of the membrane. The helical transmembrane segment at 130-150 (SAPAVPKKCLALAMLWIVGIL) threads the bilayer. At 151–165 (NSRGVKELSWLQTVS) the chain is on the cytoplasmic side. Residues 166–186 (MVLKMGILSFISLSGLFLLVT) traverse the membrane as a helical segment. Topologically, residues 187 to 208 (GRKENVRRLQNAFDAEFPEVSR) are extracellular. Residues 209-229 (LIEAIFQGYFAFSGGGSFTYV) traverse the membrane as a helical segment. The Cytoplasmic segment spans residues 230-242 (AGELKEPSKTIPR). A helical membrane pass occupies residues 243 to 263 (CIFTALPLVTVVYLLANLSYL). Residues 264 to 289 (TVLSPQELLSSDAVALTWTDRVIPQL) are Extracellular-facing. The chain crosses the membrane as a helical span at residues 290-310 (TWSVPFAISASLFSNLVTSVF). At 311-338 (ETSRTSYIASRNGQLPLLCSTLNVHSSP) the chain is on the cytoplasmic side. A helical transmembrane segment spans residues 339 to 359 (FIAVLLDVSMGSIAIVLTNLI). A topological domain (extracellular) is located at residue E360. Residues 361–381 (LINYLFFVFSIWTVLSVIGIL) form a helical membrane-spanning segment. At 382-396 (KLRYQEPNLHRPYKV) the chain is on the cytoplasmic side. A helical transmembrane segment spans residues 397-417 (FSPFLFITAAISLSMVLIPLI). The Extracellular segment spans residues 418 to 423 (KSPKMQ). The chain crosses the membrane as a helical span at residues 424-444 (YIYVFLFFLGGLLFYVPLIHF). Residues 445-479 (KLKLIWFQKLTCYLQLLFNICIPDVSDEHVAEEES) lie on the Cytoplasmic side of the membrane.

It belongs to the amino acid-polyamine-organocation (APC) superfamily. As to quaternary structure, disulfide-linked heterodimer composed of the catalytic light subunit SLC7A13 and the heavy subunit SLC3A1.

Its subcellular location is the apical cell membrane. The enzyme catalyses L-cystine(out) + L-aspartate(in) = L-cystine(in) + L-aspartate(out). The catalysed reaction is L-cystine(out) = L-cystine(in). It carries out the reaction L-aspartate(in) + L-glutamate(out) = L-aspartate(out) + L-glutamate(in). It catalyses the reaction L-aspartate(in) + L-glutamine(out) = L-aspartate(out) + L-glutamine(in). The enzyme catalyses L-aspartate(in) + L-methionine(out) = L-aspartate(out) + L-methionine(in). The catalysed reaction is L-leucine(out) + L-aspartate(in) = L-leucine(in) + L-aspartate(out). It carries out the reaction L-valine(out) + L-aspartate(in) = L-valine(in) + L-aspartate(out). It catalyses the reaction L-aspartate(in) + L-phenylalanine(out) = L-aspartate(out) + L-phenylalanine(in). The enzyme catalyses L-tyrosine(out) + L-aspartate(in) = L-tyrosine(in) + L-aspartate(out). The catalysed reaction is L-tryptophan(out) + L-aspartate(in) = L-tryptophan(in) + L-aspartate(out). Its function is as follows. Associates with SLC3A1/rBAT to form a functional heterodimeric complex that transports anionic and neutral amino acids across the apical plasma membrane of renal epithelium. Preferentially mediates exchange transport, but can also operate via facilitated diffusion. May act as a major transporter for L-cystine in late proximal tubules, ensuring its reabsorption from the luminal fluid in exchange for cytosolic L-glutamate or L-aspartate. This chain is Solute carrier family 7 member 13 (Slc7a13), found in Rattus norvegicus (Rat).